Reading from the N-terminus, the 577-residue chain is Optineurin (577 aa).

2 disordered regions span residues M1–L32 and S101–L143. The stretch at E38–S170 forms a coiled coil. An interaction with Rab8 region spans residues M58–T209. The LIR motif lies at D176–I181. S177 is modified (phosphoserine; by TBK1). Residues G186–H197 are compositionally biased toward basic and acidic residues. Disordered stretches follow at residues G186–T209 and V261–S297. A Phosphoserine modification is found at S198. The stretch at C239–D508 forms a coiled coil. 2 stretches are compositionally biased toward basic and acidic residues: residues V261–I274 and S281–P292. S342 bears the Phosphoserine mark. The interval T411 to I577 is interaction with HD. Positions R412–R520 are interaction with MYO6. The UBAN signature appears at D474 to R479. S526 bears the Phosphoserine mark. The CCHC NOA-type zinc finger occupies Q547–I577. 4 residues coordinate Zn(2+): C555, C558, H571, and C575.

In terms of assembly, self-associates. Interacts with HD. Interacts with GTF3A. Interacts with MYO6. Interacts (via UBAN) with ubiquitinated TFRC. Interacts with GTP-bound Rab8 (RAB8A and/or RAB8B). Interacts with TBC1D17. Interacts with TBK1. Interacts with TRAF3. Binds to linear ubiquitin chains. Interacts with LC3 family members MAP1LC3A, MAP1LC3B, GABARAP, GABARAPL1 and GABARAPL2; OPTN phosphorylation increases the association (at least with MAP1LC3B). Interacts with RAB12; the interaction may be indirect. Interacts with TBK1; this interaction leads to the Golgi localization of TBK1 and its subsequent activation. Interacts with palmitoyltransferase ZDHHC17/HIP14; the interaction does not lead to palmitoylation of OPTN. Interacts with CYLD. Interacts with TOM1; the interaction is indirect and is mediated by MYO6, which acts as a bridge between TOM1 and OPTN. Interacts with USP12; the interaction is independent of USP12 deubiquitinase activity and may be involved in regulation of autophagic flux. (Microbial infection) Interacts with E3 14.7 kDa protein of group C human adenovirus. Interacts with Bluetongue virus protein NS3. In terms of processing, phosphorylated by TBK1, leading to restrict bacterial proliferation in case of infection. Phosphorylation is induced by phorbol esters and decreases its half-time. Present in aqueous humor of the eye (at protein level). Expressed in the trabecular meshwork (at protein level). Expressed in nonpigmented ciliary epithelium (at protein level). Expressed at high levels in skeletal muscle, also detected in heart, brain, pancreas, kidney, placenta and liver. Expressed in dermal fibroblasts (at protein level).

It is found in the cytoplasm. Its subcellular location is the perinuclear region. The protein localises to the golgi apparatus. It localises to the trans-Golgi network. The protein resides in the cytoplasmic vesicle. It is found in the autophagosome. Its subcellular location is the recycling endosome. Plays an important role in the maintenance of the Golgi complex, in membrane trafficking, in exocytosis, through its interaction with myosin VI and Rab8. Links myosin VI to the Golgi complex and plays an important role in Golgi ribbon formation. Plays a role in the activation of innate immune response during viral infection. Mechanistically, recruits TBK1 at the Golgi apparatus, promoting its trans-phosphorylation after RLR or TLR3 stimulation. In turn, activated TBK1 phosphorylates its downstream partner IRF3 to produce IFN-beta/IFNB1. Plays a neuroprotective role in the eye and optic nerve. May act by regulating membrane trafficking and cellular morphogenesis via a complex that contains Rab8 and huntingtin (HD). Mediates the interaction of Rab8 with the probable GTPase-activating protein TBC1D17 during Rab8-mediated endocytic trafficking, such as that of transferrin receptor (TFRC/TfR); regulates Rab8 recruitment to tubules emanating from the endocytic recycling compartment. Autophagy receptor that interacts directly with both the cargo to become degraded and an autophagy modifier of the MAP1 LC3 family; targets ubiquitin-coated bacteria (xenophagy), such as cytoplasmic Salmonella enterica, and appears to function in the same pathway as SQSTM1 and CALCOCO2/NDP52. In terms of biological role, (Microbial infection) May constitute a cellular target for various viruses, such as adenovirus E3 14.7 or Bluetongue virus, to inhibit innate immune response. During RNA virus infection, such as that of Sendai virus, negatively regulates the induction of IFNB1. This is Optineurin (OPTN) from Homo sapiens (Human).